We begin with the raw amino-acid sequence, 91 residues long: Sec-independent protein translocase protein TatAt (91 aa).

Residues 9-29 (FPGLPGGPELLVVLLIVVLLF) traverse the membrane as a helical segment. The interval 48–91 (FQRGREEIEDELQDMTGDDDEDDATSESSADSVSTDSVSTESSN) is disordered. Over residues 54–72 (EIEDELQDMTGDDDEDDAT) the composition is skewed to acidic residues. The span at 73-91 (SESSADSVSTDSVSTESSN) shows a compositional bias: low complexity.

Belongs to the TatA/E family. Forms a complex with TatC. Cytoplasmic and membrane-bound TatA form high-molecular-weight complexes.

Its subcellular location is the cell membrane. The protein localises to the cytoplasm. Part of the twin-arginine translocation (Tat) system that transports large folded proteins containing a characteristic twin-arginine motif in their signal peptide across membranes. TatA could form the protein-conducting channel of the Tat system. The sequence is that of Sec-independent protein translocase protein TatAt from Haloferax volcanii (strain ATCC 29605 / DSM 3757 / JCM 8879 / NBRC 14742 / NCIMB 2012 / VKM B-1768 / DS2) (Halobacterium volcanii).